We begin with the raw amino-acid sequence, 293 residues long: MPWIQLKLNTTGANAEELSDALMEAGAVSITFQDTHDTPVFEPLPGETRLWGDTDVIGLFDAETDMKDVVAILEQHPLLGAGFTHKIEQLEDKDWEREWMDNFHPMRFGERLWICPSWRDIPDENAVNVMLDPGLAFGTGTHPTTSLCLQWLDGLDLNGKTVIDFGCGSGILAIAALKLGAAKAIGIDIDPQAIQASRDNAERNGVSDRLELYLPKDQPEAMKADVVVANILAGPLRELAPLISVLPVEGGLLGLSGILASQAESVCDAYAELFTLDPVVEKEEWCRITGRKK.

Residues Thr-145, Gly-166, Asp-188, and Asn-230 each coordinate S-adenosyl-L-methionine.

This sequence belongs to the methyltransferase superfamily. PrmA family.

Its subcellular location is the cytoplasm. The enzyme catalyses L-lysyl-[protein] + 3 S-adenosyl-L-methionine = N(6),N(6),N(6)-trimethyl-L-lysyl-[protein] + 3 S-adenosyl-L-homocysteine + 3 H(+). In terms of biological role, methylates ribosomal protein L11. The chain is Ribosomal protein L11 methyltransferase from Salmonella heidelberg (strain SL476).